Consider the following 157-residue polypeptide: Ribonuclease H (157 aa).

One can recognise an RNase H type-1 domain in the interval 1–146 (MPDLFAYTDG…ADELARAGMA (146 aa)). Mg(2+)-binding residues include Asp-9, Glu-52, Asp-74, and Asp-138.

This sequence belongs to the RNase H family. Monomer. Mg(2+) is required as a cofactor.

Its subcellular location is the cytoplasm. The catalysed reaction is Endonucleolytic cleavage to 5'-phosphomonoester.. Endonuclease that specifically degrades the RNA of RNA-DNA hybrids. The sequence is that of Ribonuclease H from Ruegeria sp. (strain TM1040) (Silicibacter sp.).